Consider the following 101-residue polypeptide: Putative RNA-binding protein RbpA (101 aa).

Residues 2-79 (SIYVGNLSYD…RDLKVNKAKP (78 aa)) form the RRM domain. The span at 73–83 (KVNKAKPRENR) shows a compositional bias: basic and acidic residues. Positions 73-101 (KVNKAKPRENRSGGGSFGGGRKSYGGSRY) are disordered. Residues 84-101 (SGGGSFGGGRKSYGGSRY) show a composition bias toward gly residues.

In Synechocystis sp. (strain ATCC 27184 / PCC 6803 / Kazusa), this protein is Putative RNA-binding protein RbpA (rbpA).